The primary structure comprises 600 residues: Threonine dehydratase, mitochondrial (600 aa).

Position 144 is an N6-(pyridoxal phosphate)lysine (Lys-144). 2 ACT-like domains span residues 425–497 (VFLS…DISD) and 519–590 (RLYR…DETN).

The protein belongs to the serine/threonine dehydratase family. In terms of assembly, homotetramer. Pyridoxal 5'-phosphate is required as a cofactor.

The protein localises to the mitochondrion. It localises to the cytoplasm. The catalysed reaction is L-threonine = 2-oxobutanoate + NH4(+). It participates in amino-acid biosynthesis; L-isoleucine biosynthesis; 2-oxobutanoate from L-threonine: step 1/1. With respect to regulation, isoleucine allosterically inhibits while valine allosterically activates this enzyme. In Schizosaccharomyces pombe (strain 972 / ATCC 24843) (Fission yeast), this protein is Threonine dehydratase, mitochondrial.